The primary structure comprises 185 residues: Casparian strip membrane protein 2 (185 aa).

Topologically, residues 1–25 (MKAVSIEAGEGSKAKRVHGVNRGIS) are cytoplasmic. The chain crosses the membrane as a helical span at residues 26 to 46 (VFDLVLRIVALVGTLASAVAM). Topologically, residues 47 to 73 (GTADQALSFSTQIVNFEAQYDDIDAFK) are extracellular. The helical transmembrane segment at 74–94 (FFVVSNSITCVYLALSIPISI) threads the bilayer. At 95-106 (FHIIRSRAGKSR) the chain is on the cytoplasmic side. The chain crosses the membrane as a helical span at residues 107 to 127 (VLLIVLDAIMLVFLTSGASAA). Topologically, residues 128–160 (AAIVYLAHNGNTSTNWFSICQQYTDFCQRSAGS) are extracellular. N-linked (GlcNAc...) asparagine glycosylation occurs at Asn138. A helical membrane pass occupies residues 161–181 (LIGSFGAMALMVLLIILSSIA). Topologically, residues 182-185 (LSRR) are cytoplasmic.

This sequence belongs to the Casparian strip membrane proteins (CASP) family. In terms of assembly, homodimer and heterodimers.

The protein resides in the cell membrane. Its function is as follows. Regulates membrane-cell wall junctions and localized cell wall deposition. Required for establishment of the Casparian strip membrane domain (CSD) and the subsequent formation of Casparian strips, a cell wall modification of the root endodermis that determines an apoplastic barrier between the intraorganismal apoplasm and the extraorganismal apoplasm and prevents lateral diffusion. The polypeptide is Casparian strip membrane protein 2 (Solanum demissum (Wild potato)).